The sequence spans 196 residues: Chromophore lyase CpcT/CpeT (196 aa).

This sequence belongs to the CpcT/CpeT biliprotein lyase family.

Functionally, covalently attaches a chromophore to Cys residue(s) of phycobiliproteins. The polypeptide is Chromophore lyase CpcT/CpeT (Synechocystis sp. (strain ATCC 27184 / PCC 6803 / Kazusa)).